The primary structure comprises 194 residues: Molybdenum cofactor guanylyltransferase (194 aa).

GTP contacts are provided by residues 12 to 14 (LAG), Lys25, Asn53, Asp71, and Asp101. Mg(2+) is bound at residue Asp101.

Belongs to the MobA family. As to quaternary structure, monomer. The cofactor is Mg(2+).

The protein resides in the cytoplasm. It catalyses the reaction Mo-molybdopterin + GTP + H(+) = Mo-molybdopterin guanine dinucleotide + diphosphate. Transfers a GMP moiety from GTP to Mo-molybdopterin (Mo-MPT) cofactor (Moco or molybdenum cofactor) to form Mo-molybdopterin guanine dinucleotide (Mo-MGD) cofactor. The chain is Molybdenum cofactor guanylyltransferase from Escherichia coli O6:H1 (strain CFT073 / ATCC 700928 / UPEC).